A 108-amino-acid chain; its full sequence is Thiosulfate sulfurtransferase GlpE (108 aa).

Residues 17–105 (KDGSAALVDI…WARQYPQDVE (89 aa)) form the Rhodanese domain. Cys65 serves as the catalytic Cysteine persulfide intermediate.

This sequence belongs to the GlpE family.

It is found in the cytoplasm. The enzyme catalyses thiosulfate + hydrogen cyanide = thiocyanate + sulfite + 2 H(+). It catalyses the reaction thiosulfate + [thioredoxin]-dithiol = [thioredoxin]-disulfide + hydrogen sulfide + sulfite + 2 H(+). Functionally, transferase that catalyzes the transfer of sulfur from thiosulfate to thiophilic acceptors such as cyanide or dithiols. May function in a CysM-independent thiosulfate assimilation pathway by catalyzing the conversion of thiosulfate to sulfite, which can then be used for L-cysteine biosynthesis. This is Thiosulfate sulfurtransferase GlpE from Serratia proteamaculans (strain 568).